The sequence spans 261 residues: Snake venom serine protease (261 aa).

An N-terminal signal peptide occupies residues 1 to 20 (MALIGVLANLLILCLSYART). The propeptide occupies 21–24 (APDR). Residues 25–249 (IIGGLECNQN…YIDWIQDIMA (225 aa)) enclose the Peptidase S1 domain. Cystine bridges form between cysteine 31–cysteine 163, cysteine 50–cysteine 66, cysteine 98–cysteine 256, cysteine 142–cysteine 210, cysteine 174–cysteine 189, and cysteine 200–cysteine 225. The active-site Charge relay system is histidine 65. Asparagine 103 carries N-linked (GlcNAc...) asparagine glycosylation. The active-site Charge relay system is aspartate 110. N-linked (GlcNAc...) asparagine glycosylation is found at asparagine 117 and asparagine 121. The Charge relay system role is filled by serine 204.

This sequence belongs to the peptidase S1 family. Snake venom subfamily. Monomer. As to expression, expressed by the venom gland.

The protein localises to the secreted. In terms of biological role, snake venom serine protease that may act in the hemostasis system of the prey. The sequence is that of Snake venom serine protease from Philodryas olfersii (Green snake).